We begin with the raw amino-acid sequence, 181 residues long: Regulator of G-protein signaling 10 (181 aa).

A disordered region spans residues 1-32 (MFNRAVSRLSRKRPPSDIHDSDGSSSSSHQSL). A compositionally biased stretch (low complexity) spans 23-32 (GSSSSSHQSL). Phosphoserine occurs at positions 24 and 41. Residues 41–156 (SLENLLEDPE…LKSDLFLKHK (116 aa)) enclose the RGS domain. The S-palmitoyl cysteine moiety is linked to residue C74. A disordered region spans residues 158 to 181 (TEEEEEDLPDAQTAAKRASRIYNT). S176 is subject to Phosphoserine.

As to quaternary structure, interacts with GNAZ, GNAI1 and GNAI3. Associates specifically with the activated, GTP-bound forms of GNAZ and GNAI3.

Its subcellular location is the cytoplasm. The protein localises to the cytosol. It is found in the nucleus. In terms of biological role, regulates G protein-coupled receptor signaling cascades, including signaling downstream of the muscarinic acetylcholine receptor CHRM2. Inhibits signal transduction by increasing the GTPase activity of G protein alpha subunits, thereby driving them into their inactive GDP-bound form. Modulates the activity of potassium channels that are activated in response to CHRM2 signaling. Activity on GNAZ is inhibited by palmitoylation of the G-protein. The polypeptide is Regulator of G-protein signaling 10 (RGS10) (Homo sapiens (Human)).